The primary structure comprises 312 residues: MELQFLGTGAGQPSKQRNVSSVALKLLDELNEIWLFDVGEATQHQILRTNIRLRKVTKIFISHNHGDHIFGLPGLLSTRSFQGDVGPLTIYGPAGIEDFVKISLKVSRTKISYPIHYVELSEPGLICEDRGFKVYTDRLDHRIPSFGFRVVEDSHPGELLIDKLAEYNIPNGPILGKLKNGEQVALADGTILDGKDFLGPEKPGRIITIIYDTRSTSSIAHLAKDADVLVHESTFAGDESKMAHNYYHSTSVQAAKIARQENVKQLCLNHISARYMGAKAKKLENQAKKVFPNTILVNDFDRVNIPMKGSKK.

7 residues coordinate Zn(2+): H63, H65, D67, H68, H141, D212, and H270. D67 acts as the Proton acceptor in catalysis.

Belongs to the RNase Z family. In terms of assembly, homodimer. Zn(2+) is required as a cofactor.

It carries out the reaction Endonucleolytic cleavage of RNA, removing extra 3' nucleotides from tRNA precursor, generating 3' termini of tRNAs. A 3'-hydroxy group is left at the tRNA terminus and a 5'-phosphoryl group is left at the trailer molecule.. Functionally, zinc phosphodiesterase, which displays some tRNA 3'-processing endonuclease activity. Probably involved in tRNA maturation, by removing a 3'-trailer from precursor tRNA. This Lactobacillus acidophilus (strain ATCC 700396 / NCK56 / N2 / NCFM) protein is Ribonuclease Z.